Reading from the N-terminus, the 498-residue chain is Diacylglycerol O-acyltransferase 1A (498 aa).

Positions 1–67 (MAISDEPETV…ANSQPQQKQD (67 aa)) are disordered. A run of 7 helical transmembrane segments spans residues 102–122 (HAGLFNLCIVVLVAVNSRLII), 146–166 (WPLFMCCLSLVVFPFAAFIVE), 178–198 (VVVVLHIIITSASLFYPVLVI), 203–223 (SAFLSGVTLMLFACVVWLKLV), 253–273 (YPYNVSFKSLAYFLVAPTLCY), 295–315 (LIIFTGVMGFIIEQYINPIVQ), and 342–362 (VWLCMFYCFFHLWLNILAELL). An FYXDWWN motif motif is present at residues 369-375 (FYQDWWN). The next 3 helical transmembrane spans lie at 410-430 (AVALLIAFLVSALFHELCIAV), 432-452 (CHIFKLWAFGGIMFQVPLVFI), and 465-485 (VGNMIFWFIFSILGQPMCVLL). The active site involves His-424.

This sequence belongs to the membrane-bound acyltransferase family. Sterol o-acyltransferase subfamily. In terms of tissue distribution, highly expressed in flowers and pods. Expressed at low levels in roots, stems and leaves.

The protein localises to the endoplasmic reticulum membrane. It catalyses the reaction an acyl-CoA + a 1,2-diacyl-sn-glycerol = a triacyl-sn-glycerol + CoA. It functions in the pathway glycerolipid metabolism; triacylglycerol biosynthesis. Its function is as follows. Major contributor to triacylglycerol (TAG) synthesis and oil accumulation in developing seeds. Catalyzes the acylation of the sn-3 hydroxy group of sn-1,2-diacylglycerol using acyl-CoA. Has a marked preference for oleoyl-CoA (18:1) and sn-1,2-dioleoylglycerol over vernoloyl-CoA and sn-1,2-divernoloylglycerol. Can use oleoyl-CoA, linoleoyl-CoA and linolenoyl-CoA as substrates. The polypeptide is Diacylglycerol O-acyltransferase 1A (Glycine max (Soybean)).